A 288-amino-acid polypeptide reads, in one-letter code: Bifunctional protein FolD (288 aa).

Residues 166-168 and I232 each bind NADP(+); that span reads GAS.

It belongs to the tetrahydrofolate dehydrogenase/cyclohydrolase family. In terms of assembly, homodimer.

It carries out the reaction (6R)-5,10-methylene-5,6,7,8-tetrahydrofolate + NADP(+) = (6R)-5,10-methenyltetrahydrofolate + NADPH. It catalyses the reaction (6R)-5,10-methenyltetrahydrofolate + H2O = (6R)-10-formyltetrahydrofolate + H(+). Its pathway is one-carbon metabolism; tetrahydrofolate interconversion. In terms of biological role, catalyzes the oxidation of 5,10-methylenetetrahydrofolate to 5,10-methenyltetrahydrofolate and then the hydrolysis of 5,10-methenyltetrahydrofolate to 10-formyltetrahydrofolate. The polypeptide is Bifunctional protein FolD (Escherichia coli (strain SMS-3-5 / SECEC)).